The primary structure comprises 127 residues: Fluoride-specific ion channel FluC (127 aa).

Transmembrane regions (helical) follow at residues 4 to 24 (LLLA…LLSM), 35 to 55 (LGTL…FAWF), 71 to 91 (TGFC…VFLL), and 103 to 123 (VFVN…LFSA). 2 residues coordinate Na(+): glycine 75 and threonine 78.

It belongs to the fluoride channel Fluc/FEX (TC 1.A.43) family.

The protein localises to the cell inner membrane. The catalysed reaction is fluoride(in) = fluoride(out). Na(+) is not transported, but it plays an essential structural role and its presence is essential for fluoride channel function. Fluoride-specific ion channel. Important for reducing fluoride concentration in the cell, thus reducing its toxicity. This Shigella flexneri serotype 5b (strain 8401) protein is Fluoride-specific ion channel FluC.